A 415-amino-acid chain; its full sequence is Serine/threonine transporter SstT (415 aa).

Transmembrane regions (helical) follow at residues 23-43 (ILIGLVLGVLLALVSKPAAIA), 47-67 (LGTLFVGALKAVAPVLVLMLV), 85-105 (ILFLYLLGTFSAALTAVLFSF), 144-164 (ALLNANYIGILVWAVGLGFAL), 181-201 (AVTFIVKVVIRFAPLGIFGLV), 220-240 (LLVLVGCMLLVALVINPLLVF), 293-313 (IPLGATINMAGAAITITVLTL), and 333-353 (VVASLCACGASGVAGGSLLLI).

The protein belongs to the dicarboxylate/amino acid:cation symporter (DAACS) (TC 2.A.23) family.

The protein resides in the cell inner membrane. The catalysed reaction is L-serine(in) + Na(+)(in) = L-serine(out) + Na(+)(out). It carries out the reaction L-threonine(in) + Na(+)(in) = L-threonine(out) + Na(+)(out). Involved in the import of serine and threonine into the cell, with the concomitant import of sodium (symport system). In Klebsiella pneumoniae (strain 342), this protein is Serine/threonine transporter SstT.